Here is a 455-residue protein sequence, read N- to C-terminus: Bifunctional protein GlmU (455 aa).

The interval 1 to 230 (MANRFAVILA…FDETIGINDR (230 aa)) is pyrophosphorylase. UDP-N-acetyl-alpha-D-glucosamine-binding positions include 9 to 12 (LAAG), K23, Q73, and 78 to 79 (GT). Position 103 (D103) interacts with Mg(2+). Positions 140, 155, 170, and 228 each coordinate UDP-N-acetyl-alpha-D-glucosamine. N228 provides a ligand contact to Mg(2+). The segment at 231-251 (IALAEAEKIMKKRINEQHMRN) is linker. Residues 252–455 (GVSIIDPEQT…KEEYASKFKK (204 aa)) form an N-acetyltransferase region. The UDP-N-acetyl-alpha-D-glucosamine site is built by R333 and K351. The Proton acceptor role is filled by H363. Residues Y366 and N377 each coordinate UDP-N-acetyl-alpha-D-glucosamine. Residues 386 to 387 (NY), A423, and R440 contribute to the acetyl-CoA site.

This sequence in the N-terminal section; belongs to the N-acetylglucosamine-1-phosphate uridyltransferase family. It in the C-terminal section; belongs to the transferase hexapeptide repeat family. Homotrimer. Mg(2+) serves as cofactor.

The protein localises to the cytoplasm. The catalysed reaction is alpha-D-glucosamine 1-phosphate + acetyl-CoA = N-acetyl-alpha-D-glucosamine 1-phosphate + CoA + H(+). It catalyses the reaction N-acetyl-alpha-D-glucosamine 1-phosphate + UTP + H(+) = UDP-N-acetyl-alpha-D-glucosamine + diphosphate. It functions in the pathway nucleotide-sugar biosynthesis; UDP-N-acetyl-alpha-D-glucosamine biosynthesis; N-acetyl-alpha-D-glucosamine 1-phosphate from alpha-D-glucosamine 6-phosphate (route II): step 2/2. It participates in nucleotide-sugar biosynthesis; UDP-N-acetyl-alpha-D-glucosamine biosynthesis; UDP-N-acetyl-alpha-D-glucosamine from N-acetyl-alpha-D-glucosamine 1-phosphate: step 1/1. The protein operates within bacterial outer membrane biogenesis; LPS lipid A biosynthesis. Catalyzes the last two sequential reactions in the de novo biosynthetic pathway for UDP-N-acetylglucosamine (UDP-GlcNAc). The C-terminal domain catalyzes the transfer of acetyl group from acetyl coenzyme A to glucosamine-1-phosphate (GlcN-1-P) to produce N-acetylglucosamine-1-phosphate (GlcNAc-1-P), which is converted into UDP-GlcNAc by the transfer of uridine 5-monophosphate (from uridine 5-triphosphate), a reaction catalyzed by the N-terminal domain. The chain is Bifunctional protein GlmU from Oceanobacillus iheyensis (strain DSM 14371 / CIP 107618 / JCM 11309 / KCTC 3954 / HTE831).